A 3131-amino-acid chain; its full sequence is Intermembrane lipid transfer protein vps1302 (3131 aa).

One can recognise a Chorein N-terminal domain in the interval 2 to 115; the sequence is LEGLLANFLN…VLESKRRQMQ (114 aa). The span at 774-801 shows a compositional bias: basic and acidic residues; that stretch reads DGKASDDDDNGDWRPESSESLDSHESEY. The segment at 774–807 is disordered; it reads DGKASDDDDNGDWRPESSESLDSHESEYKLNNTP. One can recognise an SHR-BD domain in the interval 2085–2363; it reads KVMIYPPYVI…NYSWDFPILK (279 aa).

It belongs to the VPS13 family.

The protein localises to the golgi apparatus. It is found in the trans-Golgi network. Functionally, mediates the transfer of lipids between membranes at organelle contact sites. May play a role in mitochondrial lipid homeostasis, Golgi vesicle transport, reticulophagy, actin cytoskeleton organization and formation of the forespore membrane. This Schizosaccharomyces pombe (strain 972 / ATCC 24843) (Fission yeast) protein is Intermembrane lipid transfer protein vps1302.